The chain runs to 428 residues: Chaperone SurA (428 aa).

Positions 1-20 are cleaved as a signal peptide; it reads MKNWKTLLLGIAMIANTSFA. PpiC domains are found at residues 171–272 and 282–382; these read STEL…KVND and VTEV…ELLD.

Its subcellular location is the periplasm. It catalyses the reaction [protein]-peptidylproline (omega=180) = [protein]-peptidylproline (omega=0). Its function is as follows. Chaperone involved in the correct folding and assembly of outer membrane proteins. Recognizes specific patterns of aromatic residues and the orientation of their side chains, which are found more frequently in integral outer membrane proteins. May act in both early periplasmic and late outer membrane-associated steps of protein maturation. The sequence is that of Chaperone SurA from Escherichia coli O157:H7.